The following is a 525-amino-acid chain: Ribosomal protein S6 kinase beta-1 (525 aa).

A disordered region spans residues 1 to 54; that stretch reads MRRRRRRDGFYPAPDFRDREAEDMAGVFDIDLDQPEDAGSEDELEEGGQLNESM. Positions 28-32 match the TOS motif motif; that stretch reads FDIDL. Positions 30 to 46 are enriched in acidic residues; sequence IDLDQPEDAGSEDELEE. The 262-residue stretch at 91–352 folds into the Protein kinase domain; that stretch reads FELLRVLGKG…AGEVQAHPFF (262 aa). Residues 97–105 and Lys123 each bind ATP; that span reads LGKGGYGKV. Asp218 acts as the Proton acceptor in catalysis. Position 252 is a phosphothreonine; by PDPK1 (Thr252). Residues 353–423 form the AGC-kinase C-terminal domain; sequence RHINWEELLA…VAPSVLESVK (71 aa). Residues 380-399 are disordered; that stretch reads SQFDSKFTRQTPVDSPDDST. Residues 381–399 show a composition bias toward polar residues; the sequence is QFDSKFTRQTPVDSPDDST. The residue at position 394 (Ser394) is a Phosphoserine. Thr412 is subject to Phosphothreonine; by MTOR, NEK6 and NEK7. The autoinhibitory domain stretch occupies residues 424-525; that stretch reads EKFSFEPKIR…KRPEHLRMNL (102 aa). Phosphoserine occurs at positions 434 and 441. A Phosphothreonine modification is found at Thr444. 2 positions are modified to phosphoserine: Ser447 and Ser452. Lys516 is modified (N6-acetyllysine).

This sequence belongs to the protein kinase superfamily. AGC Ser/Thr protein kinase family. S6 kinase subfamily. As to quaternary structure, interacts with PPP1R9A/neurabin-1. Interacts with RPTOR. Interacts with IRS1. Interacts with EIF3B and EIF3C. Interacts with TRAF4. Interacts with POLDIP3. Interacts (via N-terminus) with IER5. In terms of assembly, (Microbial infection) Interacts with Mumps virus phosphoprotein; this interaction may play a role in the viral replication and transcription. Phosphorylation at Thr-412 is regulated by mTORC1. The phosphorylation at this site is maintained by an agonist-dependent autophosphorylation mechanism. Activated by phosphorylation at Thr-252 by PDPK1. Dephosphorylation by PPP1CC at Thr-412 in mitochondrion. Widely expressed.

The protein localises to the synapse. It is found in the synaptosome. Its subcellular location is the mitochondrion outer membrane. It localises to the mitochondrion. The protein resides in the nucleus. The protein localises to the cytoplasm. It carries out the reaction L-seryl-[protein] + ATP = O-phospho-L-seryl-[protein] + ADP + H(+). The catalysed reaction is L-threonyl-[protein] + ATP = O-phospho-L-threonyl-[protein] + ADP + H(+). Activation requires multiple phosphorylation events on serine/threonine residues. Activation appears to be first mediated by phosphorylation of multiple sites in the autoinhibitory domain, which facilitates phosphorylation at Thr-412, disrupting the autoinhibitory mechanism and allowing phosphorylation of Thr-252 by PDPK1. The active conformation of the kinase is believed to be stabilized by a mechanism involving three conserved phosphorylation sites located in the kinase domain activation loop (Thr-252) and in the AGC-kinase C-terminal domain (Ser-394 in the middle of the tail/linker region and Thr-412 within a hydrophobic motif at its end). Activated by mTORC1; isoform Alpha I and isoform Alpha II are sensitive to rapamycin, which inhibits activating phosphorylation at Thr-412. Activated by PDPK1. In terms of biological role, serine/threonine-protein kinase that acts downstream of mTOR signaling in response to growth factors and nutrients to promote cell proliferation, cell growth and cell cycle progression. Regulates protein synthesis through phosphorylation of EIF4B, RPS6 and EEF2K, and contributes to cell survival by repressing the pro-apoptotic function of BAD. Under conditions of nutrient depletion, the inactive form associates with the EIF3 translation initiation complex. Upon mitogenic stimulation, phosphorylation by the mechanistic target of rapamycin complex 1 (mTORC1) leads to dissociation from the EIF3 complex and activation. The active form then phosphorylates and activates several substrates in the pre-initiation complex, including the EIF2B complex and the cap-binding complex component EIF4B. Also controls translation initiation by phosphorylating a negative regulator of EIF4A, PDCD4, targeting it for ubiquitination and subsequent proteolysis. Promotes initiation of the pioneer round of protein synthesis by phosphorylating POLDIP3/SKAR. In response to IGF1, activates translation elongation by phosphorylating EEF2 kinase (EEF2K), which leads to its inhibition and thus activation of EEF2. Also plays a role in feedback regulation of mTORC2 by mTORC1 by phosphorylating MAPKAP1/SIN1, MTOR and RICTOR, resulting in the inhibition of mTORC2 and AKT1 signaling. Also involved in feedback regulation of mTORC1 and mTORC2 by phosphorylating DEPTOR. Mediates cell survival by phosphorylating the pro-apoptotic protein BAD and suppressing its pro-apoptotic function. Phosphorylates mitochondrial URI1 leading to dissociation of a URI1-PPP1CC complex. The free mitochondrial PPP1CC can then dephosphorylate RPS6KB1 at Thr-412, which is proposed to be a negative feedback mechanism for the RPS6KB1 anti-apoptotic function. Mediates TNF-alpha-induced insulin resistance by phosphorylating IRS1 at multiple serine residues, resulting in accelerated degradation of IRS1. In cells lacking functional TSC1-2 complex, constitutively phosphorylates and inhibits GSK3B. May be involved in cytoskeletal rearrangement through binding to neurabin. Phosphorylates and activates the pyrimidine biosynthesis enzyme CAD, downstream of MTOR. Following activation by mTORC1, phosphorylates EPRS and thereby plays a key role in fatty acid uptake by adipocytes and also most probably in interferon-gamma-induced translation inhibition. This Homo sapiens (Human) protein is Ribosomal protein S6 kinase beta-1 (RPS6KB1).